A 182-amino-acid chain; its full sequence is Ribosome-recycling factor (182 aa).

The tract at residues 136–160 is disordered; it reads VKKSEKDGDLSEDQSRDEQETIQKE.

The protein belongs to the RRF family.

The protein localises to the cytoplasm. Its function is as follows. Responsible for the release of ribosomes from messenger RNA at the termination of protein biosynthesis. May increase the efficiency of translation by recycling ribosomes from one round of translation to another. This chain is Ribosome-recycling factor, found in Prochlorococcus marinus (strain NATL2A).